The primary structure comprises 281 residues: Pantothenate synthetase (281 aa).

30–37 (MGYLHEGH) serves as a coordination point for ATP. Catalysis depends on H37, which acts as the Proton donor. Residue Q61 coordinates (R)-pantoate. Q61 serves as a coordination point for beta-alanine. 147 to 150 (GQKD) is an ATP binding site. Q153 is a binding site for (R)-pantoate. Residues V176 and 184–187 (MSSR) each bind ATP.

This sequence belongs to the pantothenate synthetase family. As to quaternary structure, homodimer.

It is found in the cytoplasm. It carries out the reaction (R)-pantoate + beta-alanine + ATP = (R)-pantothenate + AMP + diphosphate + H(+). Its pathway is cofactor biosynthesis; (R)-pantothenate biosynthesis; (R)-pantothenate from (R)-pantoate and beta-alanine: step 1/1. Its function is as follows. Catalyzes the condensation of pantoate with beta-alanine in an ATP-dependent reaction via a pantoyl-adenylate intermediate. The sequence is that of Pantothenate synthetase from Caldicellulosiruptor saccharolyticus (strain ATCC 43494 / DSM 8903 / Tp8T 6331).